Here is a 536-residue protein sequence, read N- to C-terminus: Phosphoenolpyruvate carboxykinase (ATP) (536 aa).

The substrate site is built by Arg-61, Tyr-195, and Lys-201. Residues Lys-201, His-220, and 236–244 contribute to the ATP site; that span reads GLSGTGKTT. Mn(2+) is bound by residues Lys-201 and His-220. A Mn(2+)-binding site is contributed by Asp-257. Residues Glu-285, Arg-322, and Thr-447 each coordinate ATP. Arg-322 serves as a coordination point for substrate.

Belongs to the phosphoenolpyruvate carboxykinase (ATP) family. Mn(2+) serves as cofactor.

Its subcellular location is the cytoplasm. The enzyme catalyses oxaloacetate + ATP = phosphoenolpyruvate + ADP + CO2. Its pathway is carbohydrate biosynthesis; gluconeogenesis. Its function is as follows. Involved in the gluconeogenesis. Catalyzes the conversion of oxaloacetate (OAA) to phosphoenolpyruvate (PEP) through direct phosphoryl transfer between the nucleoside triphosphate and OAA. This chain is Phosphoenolpyruvate carboxykinase (ATP), found in Brucella melitensis biotype 1 (strain ATCC 23456 / CCUG 17765 / NCTC 10094 / 16M).